The following is a 260-amino-acid chain: Hemin import ATP-binding protein HmuV (260 aa).

Residues 2–239 enclose the ABC transporter domain; it reads IRAENITLIR…ETIARVYGIG (238 aa). Residue 34 to 41 participates in ATP binding; that stretch reads GPNGAGKS.

The protein belongs to the ABC transporter superfamily. Heme (hemin) importer (TC 3.A.1.14.5) family. As to quaternary structure, the complex is composed of two ATP-binding proteins (HmuV), two transmembrane proteins (HmuU) and a solute-binding protein (HmuT).

It is found in the cell inner membrane. In terms of biological role, part of the ABC transporter complex HmuTUV involved in hemin import. Responsible for energy coupling to the transport system. This is Hemin import ATP-binding protein HmuV from Agrobacterium fabrum (strain C58 / ATCC 33970) (Agrobacterium tumefaciens (strain C58)).